A 281-amino-acid polypeptide reads, in one-letter code: Kinetochore-associated protein NSL1 homolog (281 aa).

Position 4 is a phosphoserine (Ser4). At Thr244 the chain carries Phosphothreonine.

As to quaternary structure, component of the MIS12 complex composed of MIS12, DSN1, NSL1/DC8 and PMF1. Interacts with KNL1.

It localises to the nucleus. The protein localises to the chromosome. The protein resides in the centromere. It is found in the kinetochore. Functionally, part of the MIS12 complex which is required for normal chromosome alignment and segregation and kinetochore formation during mitosis. The polypeptide is Kinetochore-associated protein NSL1 homolog (NSL1) (Homo sapiens (Human)).